A 388-amino-acid polypeptide reads, in one-letter code: L-cysteine desulfidase (388 aa).

Residue Cys25 is the Proton acceptor of the active site. Residues Cys282, Cys322, and Cys329 each contribute to the [4Fe-4S] cluster site.

This sequence belongs to the L-cysteine desulfidase family. In terms of assembly, homotrimer. The cofactor is [4Fe-4S] cluster.

The catalysed reaction is L-cysteine + H2O = hydrogen sulfide + pyruvate + NH4(+) + H(+). Catalyzes the cleavage of L-cysteine to form 2-aminoprop-2-enoate and sulfide. The former then spontaneously hydrolyzes to pyruvate and NH(3). May be responsible for the production of sulfide required for the biosynthesis of iron-sulfur centers in this archaea. Is very specific for L-cysteine, with no activity being detected with D-cysteine, L-homocysteine, 3-mercaptopropionate (cysteine without the amino group), cysteamine (cysteine without the carboxylate), or mercaptolactate (the hydroxyl analog of cysteine). The protein is L-cysteine desulfidase of Methanocaldococcus jannaschii (strain ATCC 43067 / DSM 2661 / JAL-1 / JCM 10045 / NBRC 100440) (Methanococcus jannaschii).